The following is a 348-amino-acid chain: N-formyl peptide receptor 2 (348 aa).

The N-linked (GlcNAc...) asparagine glycan is linked to Asn-1. Residues 1–24 (NFSTPLNEYEEGSYESAGYTVLRI) are Extracellular-facing. Residues 25-47 (LPLVVLGVTFVLGVLGNGLVIWV) traverse the membrane as a helical segment. Over 48 to 58 (AGFRMTRTVTT) the chain is Cytoplasmic. Residues 59–80 (ICYLNLALADFSFTATLPFLIV) traverse the membrane as a helical segment. The Extracellular portion of the chain corresponds to 81–97 (SMAMGEKWPFGWFLCKL). Residues Cys-95 and Cys-173 are joined by a disulfide bond. Residues 98 to 118 (IHIVVDINLFGSVFLIGFIAL) form a helical membrane-spanning segment. At 119–137 (DRCICVLHPVWAQNHRTVS) the chain is on the cytoplasmic side. A helical transmembrane segment spans residues 138 to 159 (LAMKVIVGPWILALVLTLPVFL). Over 160-202 (FLTTVTIPNGDTYCTFNFASWGGTPEERLKVAITLLTARGIIR) the chain is Extracellular. Residues 203-223 (FVIGFSLPMSIVAICYGLIAA) form a helical membrane-spanning segment. At 224–239 (KIHKKGMIKSSRPLRV) the chain is on the cytoplasmic side. The helical transmembrane segment at 240–263 (LTAVVASFFICWFPFQLVALLGTV) threads the bilayer. Topologically, residues 264–283 (WLKEMLFYGKYKIIDILVNP) are extracellular. Residues 284 to 303 (TSSLAFFNCCLNPMLYVFVG) form a helical membrane-spanning segment. The Cytoplasmic segment spans residues 304–348 (QDFRERLIHSLPTSLERALSEDSAPTNDTAANCASPPAETELQAM). The disordered stretch occupies residues 322-348 (LSEDSAPTNDTAANCASPPAETELQAM). Residues 326–335 (SAPTNDTAAN) are compositionally biased toward polar residues.

It belongs to the G-protein coupled receptor 1 family. In terms of assembly, interacts with Amyloid-beta protein 42, product of APP; the interaction takes place at the cell surface and the complex is then rapidly internalized.

It localises to the cell membrane. In terms of biological role, low affinity receptor for N-formyl-methionyl peptides, which are powerful neutrophil chemotactic factors. Binding of FMLP to the receptor causes activation of neutrophils. This response is mediated via a G-protein that activates a phosphatidylinositol-calcium second messenger system. Receptor for the chemokine-like protein FAM19A5, mediating FAM19A5-stimulated macrophage chemotaxis and the inhibitory effect on TNFSF11/RANKL-induced osteoclast differentiation. The protein is N-formyl peptide receptor 2 (FPR2) of Pan troglodytes (Chimpanzee).